The sequence spans 1113 residues: Lon protease homolog, mitochondrial (1113 aa).

The N-terminal 61 residues, 1 to 61 (MLRGQTLPWR…RAFSSSSIRR (61 aa)), are a transit peptide targeting the mitochondrion. Residues 42-196 (SRLHRSLPTS…SGEKALQKPS (155 aa)) are disordered. 3 stretches are compositionally biased toward basic and acidic residues: residues 64 to 99 (KPPP…RKAA), 124 to 143 (KAGA…KDGN), and 178 to 192 (DGGK…EKAL). One can recognise a Lon N-terminal domain in the interval 204-456 (VMAIPIAKRP…KALVVLKKEL (253 aa)). 609–616 (GPPGVGKT) contributes to the ATP binding site. Residues 828–858 (LTDEGKAVQEESQKETESPDSKSPVDPEKST) show a composition bias toward basic and acidic residues. Positions 828 to 864 (LTDEGKAVQEESQKETESPDSKSPVDPEKSTTETPRV) are disordered. Positions 898-1084 (TFPPGVTMGL…SEVFDLLFTD (187 aa)) constitute a Lon proteolytic domain. Active-site residues include Ser-990 and Lys-1033.

The protein belongs to the peptidase S16 family. In terms of assembly, homohexamer or homoheptamer. Organized in a ring with a central cavity.

It localises to the mitochondrion matrix. It catalyses the reaction Hydrolysis of proteins in presence of ATP.. Its function is as follows. ATP-dependent serine protease that mediates the selective degradation of misfolded, unassembled or oxidatively damaged polypeptides as well as certain short-lived regulatory proteins in the mitochondrial matrix. May also have a chaperone function in the assembly of inner membrane protein complexes. Participates in the regulation of mitochondrial gene expression and in the maintenance of the integrity of the mitochondrial genome. Binds to mitochondrial DNA in a site-specific manner. The polypeptide is Lon protease homolog, mitochondrial (pim1) (Aspergillus niger (strain ATCC MYA-4892 / CBS 513.88 / FGSC A1513)).